A 301-amino-acid polypeptide reads, in one-letter code: Cytosolic sulfotransferase 2 (301 aa).

Lysine 53–tryptophan 58 contacts 3'-phosphoadenylyl sulfate. Histidine 115 serves as the catalytic Proton acceptor. 3'-phosphoadenylyl sulfate is bound by residues arginine 137, serine 145, tyrosine 201, valine 235–methionine 240, and arginine 263–glycine 265.

Belongs to the sulfotransferase 1 family. Expressed in liver.

Its subcellular location is the cytoplasm. With respect to regulation, inhibited by Co(2+), Zn(2+), Cd(2+) and Pb(2+) ions. Inactivated by Hg(2+) and Cu(2+) ions. In terms of biological role, sulfotransferase that utilizes 3'-phospho-5'-adenylyl sulfate (PAPS) as sulfonate donor to catalyze the sulfate conjugation of a variety of xenobiotic and endogenous compounds, including 2-naphthol, hydroxychlorobiphenyls, T3 (triiodo-L-thyronine), T4 (thyroxine), estrone and DOPA. This chain is Cytosolic sulfotransferase 2, found in Danio rerio (Zebrafish).